A 382-amino-acid polypeptide reads, in one-letter code: Dual-specificity RNA methyltransferase RlmN (382 aa).

The Proton acceptor role is filled by Glu96. Positions Gln102–Asp342 constitute a Radical SAM core domain. Cys109 and Cys345 form a disulfide bridge. 3 residues coordinate [4Fe-4S] cluster: Cys116, Cys120, and Cys123. S-adenosyl-L-methionine-binding positions include Gly170–Glu171, Ser202, Ser224–His226, and Asn302. The S-methylcysteine intermediate role is filled by Cys345.

This sequence belongs to the radical SAM superfamily. RlmN family. It depends on [4Fe-4S] cluster as a cofactor.

The protein localises to the cytoplasm. It catalyses the reaction adenosine(2503) in 23S rRNA + 2 reduced [2Fe-2S]-[ferredoxin] + 2 S-adenosyl-L-methionine = 2-methyladenosine(2503) in 23S rRNA + 5'-deoxyadenosine + L-methionine + 2 oxidized [2Fe-2S]-[ferredoxin] + S-adenosyl-L-homocysteine. It carries out the reaction adenosine(37) in tRNA + 2 reduced [2Fe-2S]-[ferredoxin] + 2 S-adenosyl-L-methionine = 2-methyladenosine(37) in tRNA + 5'-deoxyadenosine + L-methionine + 2 oxidized [2Fe-2S]-[ferredoxin] + S-adenosyl-L-homocysteine. In terms of biological role, specifically methylates position 2 of adenine 2503 in 23S rRNA and position 2 of adenine 37 in tRNAs. m2A2503 modification seems to play a crucial role in the proofreading step occurring at the peptidyl transferase center and thus would serve to optimize ribosomal fidelity. The polypeptide is Dual-specificity RNA methyltransferase RlmN (Pseudomonas fluorescens (strain SBW25)).